Here is a 315-residue protein sequence, read N- to C-terminus: Olfactory receptor 56A3 (315 aa).

At 1-29 the chain is on the extracellular side; it reads MTTHRNDTLSTEASDFLLNCFVRSPSWQH. The N-linked (GlcNAc...) asparagine glycan is linked to Asn-6. The helical transmembrane segment at 30 to 50 threads the bilayer; it reads WLSLPLSLLFLLAVGANTTLL. The Cytoplasmic portion of the chain corresponds to 51–58; the sequence is MTIWLEAS. Residues 59 to 79 form a helical membrane-spanning segment; the sequence is LHQPLYYLLSLLSLLDIVLCL. Residues 80 to 103 lie on the Extracellular side of the membrane; it reads TVIPKVLTIFWFDLRPISFPACFL. A disulfide bridge connects residues Cys-101 and Cys-193. A helical transmembrane segment spans residues 104-124; it reads QMYIMNCFLAMESCTFMVMAY. At 125–143 the chain is on the cytoplasmic side; it reads DRYVAICHPLRYPSIITDH. Residues 144–164 form a helical membrane-spanning segment; it reads FVVKAAMFILTRNVLMTLPIP. Residues 165–200 lie on the Extracellular side of the membrane; sequence ILSAQLRYCGRNVIENCICANMSVSRLSCDDVTINH. An N-linked (GlcNAc...) asparagine glycan is attached at Asn-185. Residues 201-221 traverse the membrane as a helical segment; sequence LYQFAGGWTLLGSDLILIFLS. The Cytoplasmic segment spans residues 222–241; that stretch reads YTFILRAVLRLKAEGAVAKA. Residues 242–262 traverse the membrane as a helical segment; the sequence is LSTCGSHFMLILFFSTILLVF. The Extracellular portion of the chain corresponds to 263 to 277; that stretch reads VLTHVAKKKVSPDVP. The chain crosses the membrane as a helical span at residues 278 to 298; sequence VLLNVLHHVIPAALNPIIYGV. Topologically, residues 299 to 315 are cytoplasmic; sequence RTQEIKQGMQRLLKKGC.

Belongs to the G-protein coupled receptor 1 family.

It localises to the cell membrane. In terms of biological role, odorant receptor. The protein is Olfactory receptor 56A3 (OR56A3) of Homo sapiens (Human).